We begin with the raw amino-acid sequence, 130 residues long: Fluoride-specific ion channel FluC (130 aa).

A run of 4 helical transmembrane segments spans residues 3–23, 39–59, 67–87, and 102–122; these read FVFL…YFVG, GTFS…HLAV, FGIF…SYGL, and ISYV…GWFL. Positions 77 and 80 each coordinate Na(+).

This sequence belongs to the fluoride channel Fluc/FEX (TC 1.A.43) family.

It localises to the cell inner membrane. The enzyme catalyses fluoride(in) = fluoride(out). With respect to regulation, na(+) is not transported, but it plays an essential structural role and its presence is essential for fluoride channel function. Fluoride-specific ion channel. Important for reducing fluoride concentration in the cell, thus reducing its toxicity. The sequence is that of Fluoride-specific ion channel FluC from Helicobacter pylori (strain P12).